Consider the following 208-residue polypeptide: Large ribosomal subunit protein uL4 (208 aa).

The disordered stretch occupies residues Gln44–Asn79.

The protein belongs to the universal ribosomal protein uL4 family. Part of the 50S ribosomal subunit.

One of the primary rRNA binding proteins, this protein initially binds near the 5'-end of the 23S rRNA. It is important during the early stages of 50S assembly. It makes multiple contacts with different domains of the 23S rRNA in the assembled 50S subunit and ribosome. Functionally, forms part of the polypeptide exit tunnel. This is Large ribosomal subunit protein uL4 from Bacteroides fragilis (strain YCH46).